The following is a 338-amino-acid chain: Fructose-1,6-bisphosphatase class 1 (338 aa).

Residues glutamate 92, aspartate 113, leucine 115, and aspartate 116 each contribute to the Mg(2+) site. Substrate is bound by residues 116–119 (DGSS), asparagine 208, and lysine 274. A Mg(2+)-binding site is contributed by glutamate 280.

Belongs to the FBPase class 1 family. As to quaternary structure, homotetramer. Mg(2+) is required as a cofactor.

Its subcellular location is the cytoplasm. The catalysed reaction is beta-D-fructose 1,6-bisphosphate + H2O = beta-D-fructose 6-phosphate + phosphate. The protein operates within carbohydrate biosynthesis; gluconeogenesis. In Paramagnetospirillum magneticum (strain ATCC 700264 / AMB-1) (Magnetospirillum magneticum), this protein is Fructose-1,6-bisphosphatase class 1.